The primary structure comprises 341 residues: Phosphate acyltransferase (341 aa).

Belongs to the PlsX family. In terms of assembly, homodimer. Probably interacts with PlsY.

It is found in the cytoplasm. The enzyme catalyses a fatty acyl-[ACP] + phosphate = an acyl phosphate + holo-[ACP]. It participates in lipid metabolism; phospholipid metabolism. Catalyzes the reversible formation of acyl-phosphate (acyl-PO(4)) from acyl-[acyl-carrier-protein] (acyl-ACP). This enzyme utilizes acyl-ACP as fatty acyl donor, but not acyl-CoA. The protein is Phosphate acyltransferase of Ehrlichia ruminantium (strain Gardel).